Reading from the N-terminus, the 103-residue chain is Pyrimidine/purine nucleoside phosphorylase (103 aa).

The protein belongs to the nucleoside phosphorylase PpnP family.

The catalysed reaction is a purine D-ribonucleoside + phosphate = a purine nucleobase + alpha-D-ribose 1-phosphate. The enzyme catalyses adenosine + phosphate = alpha-D-ribose 1-phosphate + adenine. It carries out the reaction cytidine + phosphate = cytosine + alpha-D-ribose 1-phosphate. It catalyses the reaction guanosine + phosphate = alpha-D-ribose 1-phosphate + guanine. The catalysed reaction is inosine + phosphate = alpha-D-ribose 1-phosphate + hypoxanthine. The enzyme catalyses thymidine + phosphate = 2-deoxy-alpha-D-ribose 1-phosphate + thymine. It carries out the reaction uridine + phosphate = alpha-D-ribose 1-phosphate + uracil. It catalyses the reaction xanthosine + phosphate = alpha-D-ribose 1-phosphate + xanthine. Its function is as follows. Catalyzes the phosphorolysis of diverse nucleosides, yielding D-ribose 1-phosphate and the respective free bases. Can use uridine, adenosine, guanosine, cytidine, thymidine, inosine and xanthosine as substrates. Also catalyzes the reverse reactions. In Shewanella putrefaciens (strain CN-32 / ATCC BAA-453), this protein is Pyrimidine/purine nucleoside phosphorylase.